The chain runs to 287 residues: 4-hydroxybenzoate octaprenyltransferase (287 aa).

Transmembrane regions (helical) follow at residues 22–42, 45–65, 95–115, 116–136, 140–160, 162–182, 214–234, 237–257, and 264–284; these read IGTY…SDGW, LQLL…GCVI, AINL…MLSW, STIY…FMKR, LPQL…FSEA, GEIP…TIAY, IGFL…ILAF, PYQL…LLIV, and CFQA…GIAI.

It belongs to the UbiA prenyltransferase family. Requires Mg(2+) as cofactor.

Its subcellular location is the cell inner membrane. It carries out the reaction all-trans-octaprenyl diphosphate + 4-hydroxybenzoate = 4-hydroxy-3-(all-trans-octaprenyl)benzoate + diphosphate. It participates in cofactor biosynthesis; ubiquinone biosynthesis. In terms of biological role, catalyzes the prenylation of para-hydroxybenzoate (PHB) with an all-trans polyprenyl group. Mediates the second step in the final reaction sequence of ubiquinone-8 (UQ-8) biosynthesis, which is the condensation of the polyisoprenoid side chain with PHB, generating the first membrane-bound Q intermediate 3-octaprenyl-4-hydroxybenzoate. This is 4-hydroxybenzoate octaprenyltransferase from Colwellia psychrerythraea (strain 34H / ATCC BAA-681) (Vibrio psychroerythus).